A 249-amino-acid polypeptide reads, in one-letter code: MTRYKAIISYDGHDFSGFQRQPHARTVQEEIEKTLVRLNSGQPVTVHGAGRTDAGVHAYGQVIHFDLAGSRDVEKLRFALDTQTSEDIDVVSVEQVADDFHCRYAKHSKTYEFLVDIGRPKNPMMRHYATFYPYDLDLSLIEEAIQDLVGTHDFTGFTASGTSVEDKVRTITVASMEYDQQRQFLIFTFSGNGFLYKQVRNMVGTLLKIGNGRMPVGQIKRILAEKDRGLAGPTAAGNGLYLKEIIYED.

Residue Asp-53 is the Nucleophile of the active site. Tyr-111 contributes to the substrate binding site.

It belongs to the tRNA pseudouridine synthase TruA family. In terms of assembly, homodimer.

The catalysed reaction is uridine(38/39/40) in tRNA = pseudouridine(38/39/40) in tRNA. In terms of biological role, formation of pseudouridine at positions 38, 39 and 40 in the anticodon stem and loop of transfer RNAs. This Streptococcus suis (strain 98HAH33) protein is tRNA pseudouridine synthase A.